A 148-amino-acid polypeptide reads, in one-letter code: Large ribosomal subunit protein bL9 (148 aa).

The protein belongs to the bacterial ribosomal protein bL9 family.

Its function is as follows. Binds to the 23S rRNA. The chain is Large ribosomal subunit protein bL9 from Chromohalobacter salexigens (strain ATCC BAA-138 / DSM 3043 / CIP 106854 / NCIMB 13768 / 1H11).